A 528-amino-acid polypeptide reads, in one-letter code: MADRREKSADQMKLWKESRANQKPDVLTTGGGNPVSDKLNLLTVGPRGPLLVQDVVFTDEMAHFDRERIPERVVHAKGAGAFGYFEVTHDITRYSKAKVFEFIGKRTPIAVRFSTVAGEAGSADTVRDPRGFAVKFYTEDGNWDLTGNNTPIFFVRDAMLFPSFIHSQKRNPQTHMKDPDMVWDFWALRPESLHQVSFLFSDRGIPDGHRHMNGYGSHTFKLVNAKDEPIYCKFHFKTDQGIRNLTVEEANRLSAEDPDYGIHDLYEAIANGNYPSWTFYIQVMTFEQAERYPFNPFDLTKIWPHKDYPLIPVGKLVLNRNPANYFAEVEQIAFDPSNMPPGIEPSPDKMLQGRLFSYPDTHRHRLGANYLQLPVNCPYKARVANYQRDGPMCFSDNQGGAPNYFPNSFSAPENQPAARESKFRVSADVARYNSSDDDNVSQVRDFYTKVLSEEERKRLCENIAGHLKGAQIFIQKRAVKNFTDVHPDYGNRVQALLDKYNAEGHHKKVIKTYTQHSAHVTANDKANL.

Residues 1 to 22 (MADRREKSADQMKLWKESRANQ) are compositionally biased toward basic and acidic residues. A disordered region spans residues 1 to 32 (MADRREKSADQMKLWKESRANQKPDVLTTGGG). Active-site residues include His-75 and Asn-148. NADP(+) is bound by residues His-194, Ser-201, Arg-203, Asn-213, Lys-237, Trp-303, His-305, and Lys-306. Position 358 (Tyr-358) interacts with heme. The short motif at 525–528 (KANL) is the Microbody targeting signal; atypical element.

The protein belongs to the catalase family. In terms of assembly, homotetramer. Heme is required as a cofactor. The cofactor is NADP(+).

The protein resides in the peroxisome matrix. It carries out the reaction 2 H2O2 = O2 + 2 H2O. Functionally, catalyzes the degradation of hydrogen peroxide (H(2)O(2)) generated by peroxisomal oxidases to water and oxygen, thereby protecting cells from the toxic effects of hydrogen peroxide. The sequence is that of Catalase (cat) from Glandirana rugosa (Japanese wrinkled frog).